The chain runs to 872 residues: Extended synaptotagmin-2-A (872 aa).

Positions 1-25 are disordered; it reads MSSESSAEKGPPPSPAENVQPGVPP. The Cytoplasmic portion of the chain corresponds to 1-31; that stretch reads MSSESSAEKGPPPSPAENVQPGVPPAAEEPG. A helical membrane pass occupies residues 32–52; the sequence is MISVDIAGLFYQFSKTFILIF. At 53-55 the chain is on the lumenal side; sequence PVY. Residues 56–76 traverse the membrane as a helical segment; it reads VLGYFGLSFSWLLIALVLLLW. The Cytoplasmic segment spans residues 77-872; it reads WRRNKGNKNS…EDGTRPAVSS (796 aa). Residues 119-298 enclose the SMP-LTD domain; that stretch reads DIERAEWLNK…LPNRITVPLV (180 aa). 2 consecutive C2 domains span residues 297-417 and 442-588; these read LVSD…DEWF and NLDQ…HLNN. 9 residues coordinate Ca(2+): lysine 328, aspartate 329, aspartate 341, aspartate 388, glutamate 389, aspartate 390, aspartate 392, aspartate 394, and aspartate 395. Residues 608–617 are compositionally biased toward basic and acidic residues; that stretch reads KPVRSPDEQH. The tract at residues 608 to 711 is disordered; it reads KPVRSPDEQH…EPTPSIASDI (104 aa). A compositionally biased stretch (pro residues) spans 632 to 652; sequence PPTPQMPSPSPAVAHKPPPTP. A compositionally biased stretch (polar residues) spans 664–681; sequence NKGTPPSASPKSPTELHQ. Residues 682–696 show a composition bias toward low complexity; that stretch reads SSSSLSGSSFTYSPS. A C2 3 domain is found at 737-859; it reads PLGQIQLTIR…DAAKGWTQWY (123 aa). The tract at residues 784-791 is required for phosphatidylinositol 4,5-bisphosphate-dependent location at the cell membrane; that stretch reads KRRSGRRK.

The protein belongs to the extended synaptotagmin family. In terms of assembly, interacts with fgfr1 that has been activated by fgf1 binding. Interacts (via C2 domains) with the AP-2 complex (via an alpha subunit). Identified in a complex with the AP-2 complex and fgfr1.

Its subcellular location is the cell membrane. It is found in the endoplasmic reticulum membrane. In terms of biological role, tethers the endoplasmic reticulum to the cell membrane and promotes the formation of appositions between the endoplasmic reticulum and the cell membrane. Binds glycerophospholipids in a barrel-like domain and may play a role in cellular lipid transport. Plays a role in the rapid internalization of fgfr1 that has been activated by fgf1 binding; this occurs most likely via the AP-2 complex. Required for normal fgf signaling and the activation of downstream signaling cascades via its role in the internalization of activated fgfr1. Required for normal embryonic development via its role in fgf signaling and the downstream regulation of t/xBRA expression. The chain is Extended synaptotagmin-2-A (esyt2-a) from Xenopus laevis (African clawed frog).